Here is a 157-residue protein sequence, read N- to C-terminus: Transcription elongation factor GreB (157 aa).

The protein belongs to the GreA/GreB family. GreB subfamily.

Necessary for efficient RNA polymerase transcription elongation past template-encoded arresting sites. The arresting sites in DNA have the property of trapping a certain fraction of elongating RNA polymerases that pass through, resulting in locked ternary complexes. Cleavage of the nascent transcript by cleavage factors such as GreA or GreB allows the resumption of elongation from the new 3'terminus. GreB releases sequences of up to 9 nucleotides in length. This Salmonella typhi protein is Transcription elongation factor GreB.